Here is a 166-residue protein sequence, read N- to C-terminus: Ribosome-binding factor A (166 aa).

Residues 122–166 (LASTAEHAGDADPYRVDTEDDDDDTDGADAEARSDADVRRGPQSG) are disordered. The segment covering 128–138 (HAGDADPYRVD) has biased composition (basic and acidic residues). Positions 139–150 (TEDDDDDTDGAD) are enriched in acidic residues. The segment covering 151–166 (AEARSDADVRRGPQSG) has biased composition (basic and acidic residues).

The protein belongs to the RbfA family. In terms of assembly, monomer. Binds 30S ribosomal subunits, but not 50S ribosomal subunits or 70S ribosomes.

It localises to the cytoplasm. One of several proteins that assist in the late maturation steps of the functional core of the 30S ribosomal subunit. Associates with free 30S ribosomal subunits (but not with 30S subunits that are part of 70S ribosomes or polysomes). Required for efficient processing of 16S rRNA. May interact with the 5'-terminal helix region of 16S rRNA. The protein is Ribosome-binding factor A of Saccharopolyspora erythraea (strain ATCC 11635 / DSM 40517 / JCM 4748 / NBRC 13426 / NCIMB 8594 / NRRL 2338).